A 520-amino-acid chain; its full sequence is Putative tyrosine carboxypeptidase MATCAP2 (520 aa).

Residues 116–153 (EEKKYHSQKQSSSTYSKRCRKPSKSPNTSRSKDPRRMK) are disordered. His331 is a Zn(2+) binding site. Catalysis depends on Glu332, which acts as the Nucleophile. His336 and Glu367 together coordinate Zn(2+).

Zn(2+) is required as a cofactor.

In terms of biological role, putative tyrosine carboxypeptidase. The polypeptide is Putative tyrosine carboxypeptidase MATCAP2 (Homo sapiens (Human)).